Here is a 145-residue protein sequence, read N- to C-terminus: 3-dehydroquinate dehydratase (145 aa).

Tyr23 serves as the catalytic Proton acceptor. Asn73, His79, and Asp86 together coordinate substrate. Residue His99 is the Proton donor of the active site. Residues 100–101 and Arg110 each bind substrate; that span reads LS.

The protein belongs to the type-II 3-dehydroquinase family. As to quaternary structure, homododecamer.

The enzyme catalyses 3-dehydroquinate = 3-dehydroshikimate + H2O. Its pathway is metabolic intermediate biosynthesis; chorismate biosynthesis; chorismate from D-erythrose 4-phosphate and phosphoenolpyruvate: step 3/7. Its function is as follows. Catalyzes a trans-dehydration via an enolate intermediate. The protein is 3-dehydroquinate dehydratase of Desulfitobacterium hafniense (strain Y51).